A 515-amino-acid polypeptide reads, in one-letter code: Probable cytosol aminopeptidase (515 aa).

Mn(2+)-binding residues include Lys-274 and Asp-279. The active site involves Lys-286. 3 residues coordinate Mn(2+): Asp-297, Asp-356, and Glu-358. The active site involves Arg-360.

It belongs to the peptidase M17 family. Mn(2+) serves as cofactor.

The protein localises to the cytoplasm. It carries out the reaction Release of an N-terminal amino acid, Xaa-|-Yaa-, in which Xaa is preferably Leu, but may be other amino acids including Pro although not Arg or Lys, and Yaa may be Pro. Amino acid amides and methyl esters are also readily hydrolyzed, but rates on arylamides are exceedingly low.. The enzyme catalyses Release of an N-terminal amino acid, preferentially leucine, but not glutamic or aspartic acids.. In terms of biological role, presumably involved in the processing and regular turnover of intracellular proteins. Catalyzes the removal of unsubstituted N-terminal amino acids from various peptides. The protein is Probable cytosol aminopeptidase of Desulforapulum autotrophicum (strain ATCC 43914 / DSM 3382 / VKM B-1955 / HRM2) (Desulfobacterium autotrophicum).